The chain runs to 255 residues: Hemin import ATP-binding protein HmuV (255 aa).

Residues 2-238 enclose the ABC transporter domain; that stretch reads LRAHNLHIRR…ESLKAVFGLE (237 aa). Residue 34-41 participates in ATP binding; it reads GPNGAGKS.

This sequence belongs to the ABC transporter superfamily. Heme (hemin) importer (TC 3.A.1.14.5) family. The complex is composed of two ATP-binding proteins (HmuV), two transmembrane proteins (HmuU) and a solute-binding protein (HmuT).

The protein localises to the cell inner membrane. Part of the ABC transporter complex HmuTUV involved in hemin import. Responsible for energy coupling to the transport system. In Pseudomonas fluorescens (strain Pf0-1), this protein is Hemin import ATP-binding protein HmuV.